A 190-amino-acid polypeptide reads, in one-letter code: Elongation factor P-like protein (190 aa).

Belongs to the elongation factor P family.

The chain is Elongation factor P-like protein from Psychromonas ingrahamii (strain DSM 17664 / CCUG 51855 / 37).